A 781-amino-acid polypeptide reads, in one-letter code: Acyl-CoA dehydrogenase family member 11 (781 aa).

At Lys177 the chain carries N6-acetyllysine. The residue at position 325 (Tyr325) is a Phosphotyrosine. Lys392 carries the post-translational modification N6-succinyllysine. FAD-binding positions include 505-515, 513-515, 539-541, and Ser541; these read FCMTEPDVASS, ASS, and WSS. Ser515 is a substrate binding site. Residue 630 to 633 coordinates substrate; sequence GPGR. Residues Arg658, Gln728, and 728-732 each bind FAD; that span reads QVCGG. Gly756 contacts substrate. Residues 757-759 and Glu759 each bind FAD; that span reads PDE.

The protein belongs to the acyl-CoA dehydrogenase family. As to quaternary structure, homodimer. It depends on FAD as a cofactor.

The protein resides in the peroxisome. The protein localises to the mitochondrion membrane. It carries out the reaction a 2,3-saturated acyl-CoA + oxidized [electron-transfer flavoprotein] + H(+) = a (2E)-enoyl-CoA + reduced [electron-transfer flavoprotein]. It catalyses the reaction docosanoyl-CoA + oxidized [electron-transfer flavoprotein] + H(+) = (2E)-docosenoyl-CoA + reduced [electron-transfer flavoprotein]. The catalysed reaction is tetracosanoyl-CoA + oxidized [electron-transfer flavoprotein] + H(+) = (2E)-tetracosenoyl-CoA + reduced [electron-transfer flavoprotein]. The enzyme catalyses eicosanoyl-CoA + oxidized [electron-transfer flavoprotein] + H(+) = (2E)-eicosenoyl-CoA + reduced [electron-transfer flavoprotein]. It carries out the reaction hexacosanoyl-CoA + oxidized [electron-transfer flavoprotein] + H(+) = (2E)-hexacosenoyl-CoA + reduced [electron-transfer flavoprotein]. It catalyses the reaction tricosanoyl-CoA + oxidized [electron-transfer flavoprotein] + H(+) = (2E)-tricosenoyl-CoA + reduced [electron-transfer flavoprotein]. It participates in lipid metabolism; fatty acid beta-oxidation. In terms of biological role, acyl-CoA dehydrogenase, that exhibits maximal activity towards saturated C22-CoA. Probably participates in beta-oxydation and energy production but could also play a role in the metabolism of specific fatty acids to control fatty acids composition of cellular lipids in brain. This chain is Acyl-CoA dehydrogenase family member 11 (ACAD11), found in Pongo abelii (Sumatran orangutan).